A 111-amino-acid chain; its full sequence is Repressed By RIM101 protein 1 (111 aa).

Positions 1 to 19 are cleaved as a signal peptide; sequence MKFSTTLLALTASIAAVMS. The tract at residues 71-90 is disordered; the sequence is SGASSATGGSSAAKSGSSSG. Residue Ser81 is the site of GPI-anchor amidated serine attachment. The propeptide at 82–111 is removed in mature form; that stretch reads AAKSGSSSGAGFAPVAGAGSLAAIAGLLLL.

Post-translationally, the GPI-anchor is attached to the protein in the endoplasmic reticulum and serves to target the protein to the cell surface. There, the glucosamine-inositol phospholipid moiety is cleaved off and the GPI-modified mannoprotein is covalently attached via its lipidless GPI glycan remnant to the 1,6-beta-glucan of the outer cell wall layer.

The protein localises to the secreted. It localises to the cell wall. It is found in the membrane. Probable cell wall protein required for filamentation at low pH. This chain is Repressed By RIM101 protein 1 (RBR1), found in Candida albicans (strain SC5314 / ATCC MYA-2876) (Yeast).